Here is a 332-residue protein sequence, read N- to C-terminus: Biotin synthase (332 aa).

The Radical SAM core domain maps to 53 to 282; it reads HFGKKVKLNM…TKEIRISGGR (230 aa). The [4Fe-4S] cluster site is built by cysteine 71, cysteine 75, and cysteine 78. Residues cysteine 115, cysteine 147, cysteine 207, and arginine 277 each contribute to the [2Fe-2S] cluster site.

Belongs to the radical SAM superfamily. Biotin synthase family. In terms of assembly, homodimer. It depends on [4Fe-4S] cluster as a cofactor. [2Fe-2S] cluster serves as cofactor.

It carries out the reaction (4R,5S)-dethiobiotin + (sulfur carrier)-SH + 2 reduced [2Fe-2S]-[ferredoxin] + 2 S-adenosyl-L-methionine = (sulfur carrier)-H + biotin + 2 5'-deoxyadenosine + 2 L-methionine + 2 oxidized [2Fe-2S]-[ferredoxin]. Its pathway is cofactor biosynthesis; biotin biosynthesis; biotin from 7,8-diaminononanoate: step 2/2. In terms of biological role, catalyzes the conversion of dethiobiotin (DTB) to biotin by the insertion of a sulfur atom into dethiobiotin via a radical-based mechanism. In Bacillus cereus (strain B4264), this protein is Biotin synthase.